A 256-amino-acid polypeptide reads, in one-letter code: Thiazole synthase (256 aa).

K95 (schiff-base intermediate with DXP) is an active-site residue. Residues G156, 183–184, and 205–206 contribute to the 1-deoxy-D-xylulose 5-phosphate site; these read AG and NT.

The protein belongs to the ThiG family. In terms of assembly, homotetramer. Forms heterodimers with either ThiH or ThiS.

It localises to the cytoplasm. It catalyses the reaction [ThiS sulfur-carrier protein]-C-terminal-Gly-aminoethanethioate + 2-iminoacetate + 1-deoxy-D-xylulose 5-phosphate = [ThiS sulfur-carrier protein]-C-terminal Gly-Gly + 2-[(2R,5Z)-2-carboxy-4-methylthiazol-5(2H)-ylidene]ethyl phosphate + 2 H2O + H(+). The protein operates within cofactor biosynthesis; thiamine diphosphate biosynthesis. Catalyzes the rearrangement of 1-deoxy-D-xylulose 5-phosphate (DXP) to produce the thiazole phosphate moiety of thiamine. Sulfur is provided by the thiocarboxylate moiety of the carrier protein ThiS. In vitro, sulfur can be provided by H(2)S. The protein is Thiazole synthase of Gluconacetobacter diazotrophicus (strain ATCC 49037 / DSM 5601 / CCUG 37298 / CIP 103539 / LMG 7603 / PAl5).